The chain runs to 142 residues: Large ribosomal subunit protein uL11 (142 aa).

The protein belongs to the universal ribosomal protein uL11 family. As to quaternary structure, part of the ribosomal stalk of the 50S ribosomal subunit. Interacts with L10 and the large rRNA to form the base of the stalk. L10 forms an elongated spine to which L12 dimers bind in a sequential fashion forming a multimeric L10(L12)X complex. In terms of processing, one or more lysine residues are methylated.

In terms of biological role, forms part of the ribosomal stalk which helps the ribosome interact with GTP-bound translation factors. The sequence is that of Large ribosomal subunit protein uL11 from Bartonella quintana (strain Toulouse) (Rochalimaea quintana).